A 410-amino-acid polypeptide reads, in one-letter code: Centromere protein U (410 aa).

The interval 1–72 (MAARRSLRYS…YETFDPPLHS (72 aa)) is disordered. The short motif at 4-21 (RRSLRYSGDPGAKRSRNT) is the Nuclear localization signal element. Over residues 28–38 (RKQKAGQKPKR) the composition is skewed to basic residues. At Thr73 the chain carries Phosphothreonine; by PLK1. The interval 87–228 (SSTSPATHRG…THSDASESMH (142 aa)) is disordered. A compositionally biased stretch (polar residues) spans 101–115 (NLNPSENEASGNDSI). A phosphoserine mark is found at Ser105, Ser110, Ser114, Ser130, Ser133, and Ser135. Over residues 138 to 149 (DNVRRSVSIERP) the composition is skewed to basic and acidic residues. The segment covering 158-169 (PAAASSSSSPSE) has biased composition (low complexity). Lys179 participates in a covalent cross-link: Glycyl lysine isopeptide (Lys-Gly) (interchain with G-Cter in SUMO2). Phosphoserine is present on Ser186. Thr191 carries the phosphothreonine modification. Residues 200–218 (TQKKVRPSPGRRKRPRRGS) show a composition bias toward basic residues. The residue at position 224 (Ser224) is a Phosphoserine. Positions 289 to 352 (QMLKALKRKN…LKNSKHFLSN (64 aa)) form a coiled coil. Residues 295–312 (KRKNTKIISNMEKKRQRL) carry the Nuclear localization signal motif.

Belongs to the CENP-U/AME1 family. Component of the CENPA-NAC complex, at least composed of CENPA, CENPC, CENPH, CENPM, CENPN, CENPT and CENPU. The CENPA-NAC complex interacts with the CENPA-CAD complex, composed of CENPI, CENPK, CENPL, CENPO, CENPP, CENPQ, CENPR and CENPS. Interacts with MLF1. Phosphorylated by PLK1 at Thr-73, creating a self-tethering site that specifically interacts with the polo-box domain of PLK1. In terms of tissue distribution, expressed at high levels in glioblastoma cell lines. Up-regulated in GBM (glioblastoma multiforme) tumors. Significantly increased in both the tumor core as well as the contralateral striatum and cortex in gliomas.

It is found in the cytoplasm. The protein localises to the nucleus. The protein resides in the chromosome. Its subcellular location is the centromere. It localises to the kinetochore. In terms of biological role, component of the CENPA-NAC (nucleosome-associated) complex, a complex that plays a central role in assembly of kinetochore proteins, mitotic progression and chromosome segregation. The CENPA-NAC complex recruits the CENPA-CAD (nucleosome distal) complex and may be involved in incorporation of newly synthesized CENPA into centromeres. Plays an important role in the correct PLK1 localization to the mitotic kinetochores. A scaffold protein responsible for the initial recruitment and maintenance of the kinetochore PLK1 population until its degradation. Involved in transcriptional repression. This chain is Centromere protein U (Cenpu), found in Rattus norvegicus (Rat).